The primary structure comprises 180 residues: Large ribosomal subunit protein uL5 (180 aa).

The protein belongs to the universal ribosomal protein uL5 family. In terms of assembly, part of the 50S ribosomal subunit; part of the 5S rRNA/L5/L18/L25 subcomplex. Contacts the 5S rRNA and the P site tRNA. Forms a bridge to the 30S subunit in the 70S ribosome.

In terms of biological role, this is one of the proteins that bind and probably mediate the attachment of the 5S RNA into the large ribosomal subunit, where it forms part of the central protuberance. In the 70S ribosome it contacts protein S13 of the 30S subunit (bridge B1b), connecting the 2 subunits; this bridge is implicated in subunit movement. Contacts the P site tRNA; the 5S rRNA and some of its associated proteins might help stabilize positioning of ribosome-bound tRNAs. This Chloroflexus aggregans (strain MD-66 / DSM 9485) protein is Large ribosomal subunit protein uL5.